The primary structure comprises 158 residues: Ribosome maturation factor RimP (158 aa).

This sequence belongs to the RimP family.

Its subcellular location is the cytoplasm. In terms of biological role, required for maturation of 30S ribosomal subunits. The chain is Ribosome maturation factor RimP from Pseudomonas fluorescens (strain Pf0-1).